Here is a 176-residue protein sequence, read N- to C-terminus: MFFKTSNPAALLAWDQFMADCLKLREEARHLDKVLGCGCRSVFSTSIGGRYFHGVNFPGNERPFSRELWTVQRPASGNSCRPRTSRIPAHLREQARELAKIWQENIPVTYARTDALLPALGLDFSATIFGPLQWFRVGDVIYVMTGMTPAQGRMTEILSDEFIRAQKQAEVNNGKQ.

The protein localises to the host cytoplasm. This is an uncharacterized protein from Escherichia phage Mu (Bacteriophage Mu).